The chain runs to 180 residues: Tubulin polymerization-promoting protein homolog (180 aa).

2 stretches are compositionally biased toward basic and acidic residues: residues 136–158 (TGAH…RADT) and 169–180 (KNKDSYDKTHGK). Residues 136–180 (TGAHKERFDAEGKGKGKSGRADTTENTGYVGAYKNKDSYDKTHGK) are disordered.

Belongs to the TPPP family.

In terms of biological role, regulator of microtubule dynamics. This chain is Tubulin polymerization-promoting protein homolog, found in Caenorhabditis elegans.